An 811-amino-acid polypeptide reads, in one-letter code: Leucine--tRNA ligase (811 aa).

The 'HIGH' region motif lies at 40-50 (PYPSGRLHMGH). Residues 579–583 (KMSKS) carry the 'KMSKS' region motif. An ATP-binding site is contributed by lysine 582.

It belongs to the class-I aminoacyl-tRNA synthetase family.

It is found in the cytoplasm. It carries out the reaction tRNA(Leu) + L-leucine + ATP = L-leucyl-tRNA(Leu) + AMP + diphosphate. The polypeptide is Leucine--tRNA ligase (Campylobacter fetus subsp. fetus (strain 82-40)).